The primary structure comprises 553 residues: Hydroxylamine reductase (553 aa).

Cysteine 3, cysteine 6, cysteine 18, and cysteine 25 together coordinate [2Fe-2S] cluster. Hybrid [4Fe-2O-2S] cluster is bound by residues histidine 252, glutamate 276, cysteine 320, cysteine 408, cysteine 436, cysteine 461, glutamate 495, and lysine 497. Residue cysteine 408 is modified to Cysteine persulfide.

The protein belongs to the HCP family. [2Fe-2S] cluster is required as a cofactor. The cofactor is hybrid [4Fe-2O-2S] cluster.

It is found in the cytoplasm. It catalyses the reaction A + NH4(+) + H2O = hydroxylamine + AH2 + H(+). Its function is as follows. Catalyzes the reduction of hydroxylamine to form NH(3) and H(2)O. The chain is Hydroxylamine reductase from Aliivibrio fischeri (strain MJ11) (Vibrio fischeri).